The chain runs to 231 residues: Fibrillarin-like rRNA/tRNA 2'-O-methyltransferase (231 aa).

S-adenosyl-L-methionine is bound by residues T89–T90, E108–F109, D133–A134, and D153–Q156.

This sequence belongs to the methyltransferase superfamily. Fibrillarin family. In terms of assembly, interacts with nop5. Component of box C/D small ribonucleoprotein (sRNP) particles that contain rpl7ae, FlpA and nop5, plus a guide RNA.

Involved in pre-rRNA and tRNA processing. Utilizes the methyl donor S-adenosyl-L-methionine to catalyze the site-specific 2'-hydroxyl methylation of ribose moieties in rRNA and tRNA. Site specificity is provided by a guide RNA that base pairs with the substrate. Methylation occurs at a characteristic distance from the sequence involved in base pairing with the guide RNA. This chain is Fibrillarin-like rRNA/tRNA 2'-O-methyltransferase, found in Sulfolobus acidocaldarius (strain ATCC 33909 / DSM 639 / JCM 8929 / NBRC 15157 / NCIMB 11770).